Here is a 166-residue protein sequence, read N- to C-terminus: MIKAIFPGSFDPITNGHVEVIEGASHMFEKLYVVIMTNTSKKYLFTEKERLELARKVFENNEKVEVIARPAELTVEVAHELGAGAIVRGLRNTADFNYERDIAGINKTLDPDLNTVLLFTRPEDSFISSSMIKETVFFGGDVSTLVPKPVAAALEEKLRNRNNEKK.

S9 lines the substrate pocket. Residues S9–F10 and H17 contribute to the ATP site. Substrate contacts are provided by K41, T74, and R88. ATP is bound by residues G89–R91, E99, and D124–S130.

It belongs to the bacterial CoaD family. As to quaternary structure, homohexamer. Requires Mg(2+) as cofactor.

The protein localises to the cytoplasm. It catalyses the reaction (R)-4'-phosphopantetheine + ATP + H(+) = 3'-dephospho-CoA + diphosphate. It functions in the pathway cofactor biosynthesis; coenzyme A biosynthesis; CoA from (R)-pantothenate: step 4/5. Functionally, reversibly transfers an adenylyl group from ATP to 4'-phosphopantetheine, yielding dephospho-CoA (dPCoA) and pyrophosphate. This chain is Phosphopantetheine adenylyltransferase, found in Lactobacillus johnsonii (strain CNCM I-12250 / La1 / NCC 533).